Reading from the N-terminus, the 150-residue chain is Cytochrome b5 type B (150 aa).

The propeptide occupies 1–15 (MSGSMATAEASGSDG). The tract at residues 1 to 21 (MSGSMATAEASGSDGKGQEVE) is disordered. Phosphoserine is present on Ser23. One can recognise a Cytochrome b5 heme-binding domain in the interval 24–100 (VTYYRMEEVA…LKQYYIGDIH (77 aa)). Lys34 is subject to N6-acetyllysine. Ser37 is modified (phosphoserine). An N6-methyllysine modification is found at Lys39. Residues His59 and His83 each coordinate heme. Ser84 carries the phosphoserine modification. The helical transmembrane segment at 122-144 (CWAYWILPIIGAVLLGFLYRYYT) threads the bilayer.

It belongs to the cytochrome b5 family. Component of a complex composed of cytochrome b5, NADH-cytochrome b5 reductase (CYB5R3) and MTARC2.

The protein localises to the mitochondrion outer membrane. In terms of biological role, cytochrome b5 is a membrane-bound hemoprotein functioning as an electron carrier for several membrane-bound oxygenases. This is Cytochrome b5 type B (CYB5B) from Pongo abelii (Sumatran orangutan).